A 143-amino-acid polypeptide reads, in one-letter code: Putative pre-16S rRNA nuclease (143 aa).

It belongs to the YqgF nuclease family.

It is found in the cytoplasm. Functionally, could be a nuclease involved in processing of the 5'-end of pre-16S rRNA. The polypeptide is Putative pre-16S rRNA nuclease (Lactococcus lactis subsp. cremoris (strain MG1363)).